The sequence spans 935 residues: Myocardin (935 aa).

Residues 12 to 27 (IRRKFRSVLQLRLQQR) carry the MEF2C-binding motif. RPEL repeat units follow at residues 18–43 (SVLQLRLQQRRTQEQLANQGLIPPLK), 62–87 (DSLRRKGRNRSDRASLVTMHILQAST), and 106–131 (DDLNEKIALRPGPLELVEKNILPMDS). The tract at residues 37–73 (GLIPPLKGPTEFHDPRKQLDSAKTEDSLRRKGRNRSD) is disordered. The span at 46-73 (TEFHDPRKQLDSAKTEDSLRRKGRNRSD) shows a compositional bias: basic and acidic residues. Positions 153-201 (FEDDSSRDGLSPDQARSEDPQGSTGSTPDIKSTEAPLDTIQDLTPGSES) are HDAC5-binding. A disordered region spans residues 155 to 283 (DDSSRDGLSP…SPPPMDSAYA (129 aa)). 2 stretches are compositionally biased toward polar residues: residues 172–182 (PQGSTGSTPDI) and 206–216 (AASQPGNQSDP). A compositionally biased stretch (basic residues) spans 244-261 (NRHKKPKDPKPKVKKLKY). Positions 287–322 (QQQQLFLQLQILSQQQQQQQQQQQQQQQQQQQQQRF) form a coiled coil. Residues 337–378 (EQMARNPNPSSTPLSNTPLSPVKNSISGQTGVSSLKPGPLPP) are disordered. The span at 342–357 (NPNPSSTPLSNTPLSP) shows a compositional bias: low complexity. The span at 358 to 369 (VKNSISGQTGVS) shows a compositional bias: polar residues. Residues 380–414 (LDDLKVSELRQQLRIRGLPVSGTKTALVDRLRPFQ) form the SAP domain. Residues Ser-454, Ser-458, Ser-462, and Ser-466 each carry the phosphoserine; by GSK3-beta modification. Residues 498–518 (ESLLSSLNGGSGPSEPDGLDS) form a disordered region. The stretch at 519–563 (EKDKMLVEKQKVINQLTWKLRQEQRQVEELRMQLQKQKSSCSDQK) forms a coiled coil. The interval 579 to 605 (SCPFAPQQASGKGQGHSSDSPPPACET) is disordered. Residues 585-597 (QQASGKGQGHSSD) are compositionally biased toward polar residues. Residues Ser-624, Ser-628, Ser-632, and Ser-636 each carry the phosphoserine; by GSK3-beta modification. The tract at residues 654-731 (NNHYFLASSS…DAVKQQMTRS (78 aa)) is disordered. Residues 660 to 691 (ASSSGAQRENHGVSSPSSSQGCAQMTGLQSSD) are compositionally biased toward polar residues. The segment covering 695 to 709 (PTFSIPSPTFSKSSS) has biased composition (low complexity). The tract at residues 714 to 935 (ITQPPSYEDA…SPMDLHLQQW (222 aa)) is required for interaction with and ubiquitination by STUB1. Ser-812, Ser-859, and Ser-866 each carry phosphoserine; by MAPK1 and MAPK3. A Phosphothreonine; by MAPK1 and MAPK3 modification is found at Thr-893.

In terms of assembly, homodimer. Interacts with MLLT7/FOXO4. Interacts with SRF, its association does not depend on specific DNA sequences for ternary complex formation. Interacts (via C-terminal) with EP300 (via CREB-binding domain). Interacts with HDAC4 and HDAC5. Interacts with MEF2C. Interacts (via C-terminus) with STUB1/CHIP. Interacts with PURB. Post-translationally, ubiquitinated; by STUB1/CHIP at the C-terminus, leading to its degradation by the proteasome. Phosphorylation by GSK3B is required for STUB1/CHIP-mediated ubiquitination. In terms of processing, phosphorylation negatively regulates transcriptional activity. Phosphorylated; by GSK3B. In terms of tissue distribution, expressed in smooth muscle cell-containing tissues. Expressed in the heart. Expressed in the aorta and bladder. Weakly expression in the lung, testis and kidney. Weakly expressed in the stomach. Weakly expressed in the intestine and colon. Expressed in the heart. As to expression, predominantly expressed in cardiac muscle. In terms of tissue distribution, predominantly expressed in smooth muscle cell-rich tissues.

The protein resides in the nucleus speckle. Smooth muscle cells (SM) and cardiac muscle cells-specific transcriptional factor which uses the canonical single or multiple CArG boxes DNA sequence. Acts as a cofactor of serum response factor (SRF) with the potential to modulate SRF-target genes. Plays a crucial role in cardiogenesis, urinary bladder development, and differentiation of the smooth muscle cell lineage (myogenesis). Positively regulates the transcription of genes involved in vascular smooth muscle contraction. Functionally, positively regulates the activation of smooth muscle cell gene promoter regions. In terms of biological role, positively regulates the activation of smooth muscle cell gene promoter regions. Activation of the MYH6 promoter is enhanced in the presence of MEF2C. The chain is Myocardin (Myocd) from Mus musculus (Mouse).